The primary structure comprises 292 residues: Putative ribonuclease 3 (292 aa).

The region spanning 32–158 (LGMSDEYIPY…FFGATEWLID (127 aa)) is the RNase III domain. The DRBM domain occupies 204 to 276 (DAKTRFNEVI…ASRALETLAL (73 aa)).

It belongs to the IIV-6 142R family.

It catalyses the reaction Endonucleolytic cleavage to 5'-phosphomonoester.. In terms of biological role, digests double-stranded RNA. The chain is Putative ribonuclease 3 from Acheta domesticus (House cricket).